Here is a 152-residue protein sequence, read N- to C-terminus: Small ribosomal subunit protein uS15 (152 aa).

Basic residues predominate over residues 1–11 (MAKMHTKRKGK). The segment at 1 to 23 (MAKMHTKRKGKSSSTRPIRTDPP) is disordered.

It belongs to the universal ribosomal protein uS15 family. Part of the 30S ribosomal subunit.

The chain is Small ribosomal subunit protein uS15 from Methanosarcina acetivorans (strain ATCC 35395 / DSM 2834 / JCM 12185 / C2A).